The primary structure comprises 123 residues: Phospholipase A2 (123 aa).

Intrachain disulfides connect cysteine 11–cysteine 77, cysteine 27–cysteine 123, cysteine 29–cysteine 45, cysteine 44–cysteine 105, cysteine 51–cysteine 98, cysteine 61–cysteine 91, and cysteine 84–cysteine 96. Tyrosine 28, glycine 30, and glycine 32 together coordinate Ca(2+). Residue histidine 48 is part of the active site. Aspartate 49 lines the Ca(2+) pocket. Residue aspartate 99 is part of the active site.

Belongs to the phospholipase A2 family. Monomer or homodimer. Ca(2+) is required as a cofactor. In terms of processing, activated by trypsin cleavage in the duodenum. Can also be activated by thrombin or autocatalytically.

The protein resides in the secreted. The catalysed reaction is a 1,2-diacyl-sn-glycero-3-phosphocholine + H2O = a 1-acyl-sn-glycero-3-phosphocholine + a fatty acid + H(+). It carries out the reaction 1,2-ditetradecanoyl-sn-glycero-3-phosphocholine + H2O = 1-tetradecanoyl-sn-glycero-3-phosphocholine + tetradecanoate + H(+). The enzyme catalyses 1,2-dihexadecanoyl-sn-glycero-3-phosphocholine + H2O = 1-hexadecanoyl-sn-glycero-3-phosphocholine + hexadecanoate + H(+). It catalyses the reaction 1-hexadecanoyl-2-(9Z-octadecenoyl)-sn-glycero-3-phosphocholine + H2O = 1-hexadecanoyl-sn-glycero-3-phosphocholine + (9Z)-octadecenoate + H(+). The catalysed reaction is 1-hexadecanoyl-2-(5Z,8Z,11Z,14Z-eicosatetraenoyl)-sn-glycero-3-phosphocholine + H2O = 1-hexadecanoyl-sn-glycero-3-phosphocholine + (5Z,8Z,11Z,14Z)-eicosatetraenoate + H(+). It carries out the reaction 1-hexadecanoyl-2-(9Z-octadecenoyl)-sn-glycero-3-phospho-(1'-sn-glycerol) + H2O = 1-hexadecanoyl-sn-glycero-3-phospho-(1'-sn-glycerol) + (9Z)-octadecenoate + H(+). The enzyme catalyses N-hexadecanoyl-1,2-di-(9Z-octadecenoyl)-sn-glycero-3-phosphoethanolamine + H2O = N-hexadecanoyl-1-(9Z-octadecenoyl)-sn-glycero-3-phosphoethanolamine + (9Z)-octadecenoate + H(+). It catalyses the reaction 1-hexadecanoyl-2-(9Z,12Z-octadecadienoyl)-sn-glycero-3-phosphoethanolamine + H2O = 1-hexadecanoyl-sn-glycero-3-phosphoethanolamine + (9Z,12Z)-octadecadienoate + H(+). The catalysed reaction is N,1-dihexadecanoyl-2-(9Z,12Z-octadecadienoyl)-sn-glycero-3-phosphoethanolamine + H2O = N,1-dihexadecanoyl-sn-glycero-3-phosphoethanolamine + (9Z,12Z)-octadecadienoate + H(+). In terms of biological role, secretory calcium-dependent phospholipase A2 that primarily targets dietary phospholipids in the intestinal tract. Hydrolyzes the ester bond of the fatty acyl group attached at sn-2 position of phospholipids (phospholipase A2 activity) with preference for phosphatidylethanolamines and phosphatidylglycerols over phosphatidylcholines. May play a role in the biosynthesis of N-acyl ethanolamines that regulate energy metabolism and inflammation in the intestinal tract. Hydrolyzes N-acyl phosphatidylethanolamines to N-acyl lysophosphatidylethanolamines, which are further cleaved by a lysophospholipase D to release N-acyl ethanolamines. May act in an autocrine and paracrine manner. Has anti-helminth activity in a process regulated by gut microbiota. Upon helminth infection of intestinal epithelia, directly affects phosphatidylethanolamine contents in the membrane of helminth larvae, likely controlling an array of phospholipid-mediated cellular processes such as membrane fusion and cell division while providing for better immune recognition, ultimately reducing larvae integrity and infectivity. The chain is Phospholipase A2 (PLA2G1B) from Ovis aries (Sheep).